Reading from the N-terminus, the 318-residue chain is Taste receptor type 2 member 60 (318 aa).

Over 1–7 (MNGDHMV) the chain is Extracellular. The helical transmembrane segment at 8–28 (LGSSVTDKKAIILVTILLLLR) threads the bilayer. The Cytoplasmic segment spans residues 29 to 40 (LVAIAGNGFITA). Residues 41-61 (ALGVEWVLRRMLLPCDKLLVS) traverse the membrane as a helical segment. Residues 62–88 (LGASRFCLQSVVMGKTIYVFLHPMAFP) lie on the Extracellular side of the membrane. The chain crosses the membrane as a helical span at residues 89–109 (YNPVLQFLAFQWDFLNAATLW). The Cytoplasmic segment spans residues 110–128 (SSTWLSVFYCVKIATFTHP). A helical transmembrane segment spans residues 129–149 (VFFWLKHKLSGWLPWMLFSSV). Residues 150–183 (GLSSFTTILFFIGNHRMYQNYLRNHLQPWNVTGD) lie on the Extracellular side of the membrane. N-linked (GlcNAc...) asparagine glycosylation occurs at asparagine 179. A helical transmembrane segment spans residues 184 to 204 (SIRSYCEKFYLFPLKMITWTM). Over 205 to 234 (PTAVFFICMILLITSLGRHRKKALLTTSGF) the chain is Cytoplasmic. Residues 235–255 (REPSVQAHIKALLALLSFAML) traverse the membrane as a helical segment. Topologically, residues 256–264 (FISYFLSLV) are extracellular. The chain crosses the membrane as a helical span at residues 265–285 (FSAAGIFPPLDFKFWVWESVI). Over 286–318 (YLCAAVHPIILLFSNCRLRAVLKSRRSSRCGTP) the chain is Cytoplasmic.

Belongs to the G-protein coupled receptor T2R family. In terms of tissue distribution, expressed in subsets of taste receptor cells of the tongue and exclusively in gustducin-positive cells.

The protein resides in the membrane. Functionally, receptor that may play a role in the perception of bitterness and is gustducin-linked. May play a role in sensing the chemical composition of the gastrointestinal content. The activity of this receptor may stimulate alpha gustducin, mediate PLC-beta-2 activation and lead to the gating of TRPM5. The sequence is that of Taste receptor type 2 member 60 (TAS2R60) from Homo sapiens (Human).